A 355-amino-acid polypeptide reads, in one-letter code: Chorismate synthase (355 aa).

Position 48 (Arg-48) interacts with NADP(+). FMN contacts are provided by residues 125–127, 238–239, Gly-278, 293–297, and Arg-319; these read RSS, NA, and KPASS.

Belongs to the chorismate synthase family. As to quaternary structure, homotetramer. It depends on FMNH2 as a cofactor.

It catalyses the reaction 5-O-(1-carboxyvinyl)-3-phosphoshikimate = chorismate + phosphate. It functions in the pathway metabolic intermediate biosynthesis; chorismate biosynthesis; chorismate from D-erythrose 4-phosphate and phosphoenolpyruvate: step 7/7. In terms of biological role, catalyzes the anti-1,4-elimination of the C-3 phosphate and the C-6 proR hydrogen from 5-enolpyruvylshikimate-3-phosphate (EPSP) to yield chorismate, which is the branch point compound that serves as the starting substrate for the three terminal pathways of aromatic amino acid biosynthesis. This reaction introduces a second double bond into the aromatic ring system. This is Chorismate synthase from Baumannia cicadellinicola subsp. Homalodisca coagulata.